A 396-amino-acid polypeptide reads, in one-letter code: Large ribosomal subunit protein uL24m (396 aa).

Residues 374–396 (QLSLGGGQEDAATTTSPEQPKVV) are disordered. Residues 384–396 (AATTTSPEQPKVV) show a composition bias toward polar residues.

Belongs to the universal ribosomal protein uL24 family. As to quaternary structure, component of the mitochondrial large ribosomal subunit (mt-LSU). Mature N.crassa 74S mitochondrial ribosomes consist of a small (37S) and a large (54S) subunit. The 37S small subunit contains a 16S ribosomal RNA (16S mt-rRNA) and 32 different proteins. The 54S large subunit contains a 23S rRNA (23S mt-rRNA) and 42 different proteins. uL24m forms the wall of the exit tunnel.

It is found in the mitochondrion. Its function is as follows. Component of the mitochondrial ribosome (mitoribosome), a dedicated translation machinery responsible for the synthesis of mitochondrial genome-encoded proteins, including at least some of the essential transmembrane subunits of the mitochondrial respiratory chain. The mitoribosomes are attached to the mitochondrial inner membrane and translation products are cotranslationally integrated into the membrane. The protein is Large ribosomal subunit protein uL24m (mrpl40) of Neurospora crassa (strain ATCC 24698 / 74-OR23-1A / CBS 708.71 / DSM 1257 / FGSC 987).